The following is a 496-amino-acid chain: PE-PGRS family protein PE_PGRS1 (496 aa).

In terms of domain architecture, PE spans 4–94 (LITSPATVAA…VCYAAAETAN (91 aa)). Residues 461-480 (LIGNGGDGGPGMFGGPGGAG) form a disordered region.

This sequence belongs to the mycobacterial PE family. PGRS subfamily.

Its subcellular location is the secreted. It localises to the cell wall. The protein localises to the host mitochondrion. When expressed in host mitochondria, induces mitochondrial stress which results in mitochondrial membrane depolarization, up-regulation of mitochondrial superoxides and release of cytochrome-C in the cytoplasm. The cytochrome-C in cytoplasm triggers the activation of caspase-9, caspase-3 and caspase-7, leading to the apoptosis of host macrophages. Being a late expressing protein, apoptosis induction by PE_PGRS1 may facilitate the M.tuberculosis survival and silent expansion of its niche at the site of granuloma. Its function is as follows. When expressed in THP-1 macrophages, promotes the survival of mycobacteria within macrophages after a 24- to 48-hour infection by blocking endoplasmic reticulum stress and inhibiting host cell apoptosis. Can chelate excessive intracellular calcium in THP-1 macrophages, which reduces the concentration of intracellular free Ca(2+) and blocks the PERK-eIF2alpha-ATF4 axis, thereby inhibiting the endoplasmic reticulum stress caused by infection. It also reduces the apoptosis of THP-1 macrophages by decreasing the activation of caspase-3 and caspase-9. This Mycobacterium tuberculosis (strain ATCC 25618 / H37Rv) protein is PE-PGRS family protein PE_PGRS1.